The chain runs to 125 residues: Succinate dehydrogenase hydrophobic membrane anchor subunit (125 aa).

Over 1 to 24 the chain is Cytoplasmic; that stretch reads MIYDFKAEIIKAKNSSFSKSGSHH. Residues 25-45 traverse the membrane as a helical segment; it reads WLLQRVTGVILALCSFWLIYF. Topologically, residues 46 to 67 are periplasmic; that stretch reads MFTNKNNDINIIMWEFKKPFNI. Residues 68 to 89 form a helical membrane-spanning segment; the sequence is VILLITVTISLYHSVLGMRVVI. Position 80 (H80) interacts with heme. The Cytoplasmic portion of the chain corresponds to 90–99; the sequence is EDYINCHKLR. Y92 lines the a ubiquinone pocket. A helical membrane pass occupies residues 100–123; it reads NTLIIIVKLFCILTIVSFVVAIFY.

Part of an enzyme complex containing four subunits: a flavoprotein, an iron-sulfur protein, plus two membrane-anchoring proteins, SdhC and SdhD. Requires heme as cofactor.

It localises to the cell inner membrane. Its pathway is carbohydrate metabolism; tricarboxylic acid cycle. Its function is as follows. Membrane-anchoring subunit of succinate dehydrogenase (SDH). In Rickettsia prowazekii (strain Madrid E), this protein is Succinate dehydrogenase hydrophobic membrane anchor subunit (sdhD).